Here is a 1381-residue protein sequence, read N- to C-terminus: Hepatocyte growth factor receptor (1381 aa).

Residues 1–24 (MKALAVLGPGLLVHLLTLVQKSGG) form the signal peptide. Over 25–932 (ECKEALVKSA…VIVQPDQNFT (908 aa)) the chain is Extracellular. The region spanning 27–515 (KEALVKSAMN…TGKTITKIPL (489 aa)) is the Sema domain. 2 N-linked (GlcNAc...) asparagine glycosylation sites follow: Asn45 and Asn74. 6 cysteine pairs are disulfide-bonded: Cys95/Cys101, Cys98/Cys159, Cys133/Cys141, Cys172/Cys175, Cys298/Cys363, and Cys385/Cys397. N-linked (GlcNAc...) asparagine glycosylation occurs at Asn106. N-linked (GlcNAc...) asparagine glycosylation is present at Asn358. N-linked (GlcNAc...) asparagine glycosylation occurs at Asn399. Intrachain disulfides connect Cys520-Cys538, Cys526-Cys561, Cys529-Cys545, and Cys541-Cys551. IPT/TIG domains are found at residues 563–655 (PTIY…FSYV), 657–739 (PIIT…FNYR), and 742–836 (PIVD…LIYV). Thr582 is a glycosylation site (O-linked (Man) threonine). N-linked (GlcNAc...) asparagine glycosylation is found at Asn607 and Asn635. O-linked (Man) threonine glycans are attached at residues Thr676 and Thr761. N-linked (GlcNAc...) asparagine glycans are attached at residues Asn785, Asn879, and Asn930. Residues 933 to 955 (GLIVGVISISVLLSLLFGLFLWL) traverse the membrane as a helical segment. At 956–1381 (KRRKQIKDLG…QDHVDGEGDT (426 aa)) the chain is on the cytoplasmic side. Ser966 is subject to Phosphoserine. Phosphothreonine is present on Thr977. A phosphoserine mark is found at Ser990, Ser997, and Ser1000. The residue at position 1003 (Tyr1003) is a Phosphotyrosine. Residues 1078 to 1345 (VHFNEVIGRG…RISAIFSAFI (268 aa)) enclose the Protein kinase domain. ATP-binding positions include 1084-1092 (IGRGHFGCV) and Lys1110. Catalysis depends on Asp1204, which acts as the Proton acceptor. The interaction with RANBP9 stretch occupies residues 1212 to 1381 (LDENFTVKVA…QDHVDGEGDT (170 aa)). The residue at position 1230 (Tyr1230) is a Phosphotyrosine. Tyr1234 and Tyr1235 each carry phosphotyrosine; by autocatalysis. A Phosphothreonine modification is found at Thr1289. The segment at 1320-1359 (WHPKAEQRPSFAELVSRISAIFSAFIGEHYVHVNATYVNV) is interaction with MUC20. Phosphotyrosine; by autocatalysis occurs at positions 1349 and 1356. Tyr1365 carries the phosphotyrosine modification.

Belongs to the protein kinase superfamily. Tyr protein kinase family. In terms of assembly, heterodimer made of an alpha chain (50 kDa) and a beta chain (145 kDa) which are disulfide linked. Binds PLXNB1. Interacts when phosphorylated with downstream effectors including STAT3, PIK3R1, SRC, PCLG1, GRB2 and GAB1. Interacts with SPSB1, SPSB2 and SPSB4. Interacts with INPP5D/SHIP1. When phosphorylated at Tyr-1356, interacts with INPPL1/SHIP2. Interacts with RANBP9 and RANBP10, as well as SPSB1, SPSB2, SPSB3 and SPSB4. SPSB1 binding occurs in the presence and in the absence of HGF, however HGF treatment has a positive effect on this interaction. Interacts with MUC20; prevents interaction with GRB2 and suppresses hepatocyte growth factor-induced cell proliferation. Interacts with GRB10. Interacts with PTPN1 and PTPN2. Interacts with HSP90AA1 and HSP90AB1; the interaction suppresses MET kinase activity. Interacts with tensin TNS3. Interacts (when phosphorylated) with tensin TNS4 (via SH2 domain); the interaction increases MET protein stability by inhibiting MET endocytosis and subsequent lysosomal degradation. In terms of processing, autophosphorylated in response to ligand binding on Tyr-1234 and Tyr-1235 in the kinase domain leading to further phosphorylation of Tyr-1349 and Tyr-1356 in the C-terminal multifunctional docking site. Dephosphorylated by PTPRJ at Tyr-1349 and Tyr-1365. Dephosphorylated by PTPN1 and PTPN2. Ubiquitinated. Ubiquitination by CBL regulates the receptor stability and activity through proteasomal degradation. Post-translationally, O-mannosylation of IPT/TIG domains by TMEM260 is required for protein maturation. O-mannosylated residues are composed of single mannose glycans that are not elongated or modified.

Its subcellular location is the membrane. The catalysed reaction is L-tyrosyl-[protein] + ATP = O-phospho-L-tyrosyl-[protein] + ADP + H(+). With respect to regulation, in its inactive state, the C-terminal tail interacts with the catalytic domain and inhibits the kinase activity. Upon ligand binding, the C-terminal tail is displaced and becomes phosphorylated, thus increasing the kinase activity. Functionally, receptor tyrosine kinase that transduces signals from the extracellular matrix into the cytoplasm by binding to hepatocyte growth factor/HGF ligand. Regulates many physiological processes including proliferation, scattering, morphogenesis and survival. Ligand binding at the cell surface induces autophosphorylation of MET on its intracellular domain that provides docking sites for downstream signaling molecules. Following activation by ligand, interacts with the PI3-kinase subunit PIK3R1, PLCG1, SRC, GRB2, STAT3 or the adapter GAB1. Recruitment of these downstream effectors by MET leads to the activation of several signaling cascades including the RAS-ERK, PI3 kinase-AKT, or PLCgamma-PKC. The RAS-ERK activation is associated with the morphogenetic effects while PI3K/AKT coordinates prosurvival effects. During embryonic development, MET signaling plays a role in gastrulation, development and migration of muscles and neuronal precursors, angiogenesis and kidney formation. In adults, participates in wound healing as well as organ regeneration and tissue remodeling. Also promotes differentiation and proliferation of hematopoietic cells. This is Hepatocyte growth factor receptor (MET) from Rhinolophus ferrumequinum (Greater horseshoe bat).